A 281-amino-acid chain; its full sequence is Putative pyruvate, phosphate dikinase regulatory protein (281 aa).

150-157 (GVSRTSKT) is an ADP binding site.

Belongs to the pyruvate, phosphate/water dikinase regulatory protein family. PDRP subfamily.

It catalyses the reaction N(tele)-phospho-L-histidyl/L-threonyl-[pyruvate, phosphate dikinase] + ADP = N(tele)-phospho-L-histidyl/O-phospho-L-threonyl-[pyruvate, phosphate dikinase] + AMP + H(+). The catalysed reaction is N(tele)-phospho-L-histidyl/O-phospho-L-threonyl-[pyruvate, phosphate dikinase] + phosphate + H(+) = N(tele)-phospho-L-histidyl/L-threonyl-[pyruvate, phosphate dikinase] + diphosphate. In terms of biological role, bifunctional serine/threonine kinase and phosphorylase involved in the regulation of the pyruvate, phosphate dikinase (PPDK) by catalyzing its phosphorylation/dephosphorylation. This chain is Putative pyruvate, phosphate dikinase regulatory protein, found in Sorangium cellulosum (strain So ce56) (Polyangium cellulosum (strain So ce56)).